The primary structure comprises 664 residues: DCC-interacting protein 13-beta (664 aa).

Positions 1-428 are required for RAB5A binding; the sequence is MPAVDKLLLE…NSEMENENDK (428 aa). Residues 3 to 268 enclose the BAR domain; sequence AVDKLLLEEA…ESVYTPDSDV (266 aa). One can recognise a PH domain in the interval 277–375; sequence LIQKAGYLNL…WICAINNISR (99 aa). In terms of domain architecture, PID spans 488–637; that stretch reads SLLQQMFIVR…LMLSIPLTND (150 aa). Residues 643–664 are disordered; sequence LNDQPDDDDGNPNEHRGAESEA. A compositionally biased stretch (basic and acidic residues) spans 654–664; it reads PNEHRGAESEA.

Homodimer. Homotetramer. Binds RAB5A/Rab5 through an N-terminal domain. This interaction is essential for its recruitment to endosomal membranes as well as its role in cell proliferation. Binds subunits of the NuRD/MeCP1 complex. Interacts with FSHR; interaction is independent of follicle stimulating hormone stimulation. Interacts with APPL1; the interaction is decreased by adiponectin in a time-dependent manner. Forms a complex comprising APPL1, RUVBL2, CTNNB1, HDAC1 and HDAC2; interaction reduces interaction between CTNNB1, HDAC1, HDAC2 and RUVBL2 leading to the decrease of deacetylase activity of this complex; affects the recruitment of repressive complexes to the Wnt target genes. Interacts (via BAR domain) with TBC1D1; interaction is dependent of TBC1D1 phosphorylation at 'Ser-235'; interaction diminishes the phosphorylation of TBC1D1 at 'Thr-596', resulting in inhibition of SLC2A4 translocation and glucose uptake. Interacts with ANXA2; targets APPL2 to endosomes and acting in parallel to RAB5A. Interacts with RAB31 (in GTP-bound form); interaction contributes to or enhances recruitment of APPL2 to the phagosomes; interaction enhances Fc-gamma receptor-mediated phagocytosis through PI3K/Akt signaling in macrophages. Interacts with PIK3R1; forms a complex with PIK3R1 and APPL1. Interacts (via BAR domain) with ADIPOR1; hinders the accessibility of APPL1 to ADIPOR1; negatively regulates adiponectin signaling; ADIPOQ dissociates this interaction and facilitates the recruitment of APPL1 to ADIPOR1. Interacts (via BAR domain) with ADIPOR2; ADIPOQ dissociates this interaction. As to expression, high levels in brain, heart, kidney and skeletal muscle.

It is found in the early endosome membrane. The protein resides in the nucleus. Its subcellular location is the cell membrane. It localises to the endosome membrane. The protein localises to the cytoplasm. It is found in the cytoplasmic vesicle. The protein resides in the phagosome. Its subcellular location is the cell projection. It localises to the ruffle. The protein localises to the ruffle membrane. It is found in the phagosome membrane. In terms of biological role, multifunctional adapter protein that binds to various membrane receptors, nuclear factors and signaling proteins to regulate many processes, such as cell proliferation, immune response, endosomal trafficking and cell metabolism. Regulates signaling pathway leading to cell proliferation through interaction with RAB5A and subunits of the NuRD/MeCP1 complex. Plays a role in immune response by modulating phagocytosis, inflammatory and innate immune responses. In macrophages, enhances Fc-gamma receptor-mediated phagocytosis through interaction with RAB31 leading to activation of PI3K/Akt signaling. In response to LPS, modulates inflammatory responses by playing a key role on the regulation of TLR4 signaling and in the nuclear translocation of RELA/NF-kappa-B p65 and the secretion of pro- and anti-inflammatory cytokines. Also functions as a negative regulator of innate immune response via inhibition of AKT1 signaling pathway by forming a complex with APPL1 and PIK3R1. Plays a role in endosomal trafficking of TGFBR1 from the endosomes to the nucleus. Plays a role in cell metabolism by regulating adiponecting ans insulin signaling pathways and adaptative thermogenesis. In muscle, negatively regulates adiponectin-simulated glucose uptake and fatty acid oxidation by inhibiting adiponectin signaling pathway through APPL1 sequestration thereby antagonizing APPL1 action. In muscles, negatively regulates insulin-induced plasma membrane recruitment of GLUT4 and glucose uptake through interaction with TBC1D1. Plays a role in cold and diet-induced adaptive thermogenesis by activating ventromedial hypothalamus (VMH) neurons throught AMPK inhibition which enhances sympathetic outflow to subcutaneous white adipose tissue (sWAT), sWAT beiging and cold tolerance. Also plays a role in other signaling pathways namely Wnt/beta-catenin, HGF and glucocorticoid receptor signaling. Positive regulator of beta-catenin/TCF-dependent transcription through direct interaction with RUVBL2/reptin resulting in the relief of RUVBL2-mediated repression of beta-catenin/TCF target genes by modulating the interactions within the beta-catenin-reptin-HDAC complex. May affect adult neurogenesis in hippocampus and olfactory system via regulating the sensitivity of glucocorticoid receptor. Required for fibroblast migration through HGF cell signaling. The chain is DCC-interacting protein 13-beta from Homo sapiens (Human).